Reading from the N-terminus, the 279-residue chain is Oxygen-dependent coproporphyrinogen-III oxidase (279 aa).

S102 provides a ligand contact to substrate. The a divalent metal cation site is built by H106 and H116. H116 serves as the catalytic Proton donor. 118-120 (NTR) is a substrate binding site. The a divalent metal cation site is built by H149 and H179. Residues 244–279 (YVEFNLLYDRGTKFGLMTDGNVEAILMSLPPEVKFN) form an important for dimerization region.

Belongs to the aerobic coproporphyrinogen-III oxidase family. In terms of assembly, homodimer. The cofactor is a divalent metal cation.

It localises to the cytoplasm. It catalyses the reaction coproporphyrinogen III + O2 + 2 H(+) = protoporphyrinogen IX + 2 CO2 + 2 H2O. The protein operates within porphyrin-containing compound metabolism; protoporphyrin-IX biosynthesis; protoporphyrinogen-IX from coproporphyrinogen-III (O2 route): step 1/1. Functionally, involved in the heme biosynthesis. Catalyzes the aerobic oxidative decarboxylation of propionate groups of rings A and B of coproporphyrinogen-III to yield the vinyl groups in protoporphyrinogen-IX. In Rickettsia peacockii (strain Rustic), this protein is Oxygen-dependent coproporphyrinogen-III oxidase.